A 775-amino-acid chain; its full sequence is Coiled-coil domain-containing protein R3HCC1L (775 aa).

Composition is skewed to basic and acidic residues over residues 1-16 and 65-112; these read MQQEAERCRVRTKRPD and ESQR…KGAE. Disordered regions lie at residues 1-127 and 235-262; these read MQQE…HRAP and LSSDSETAPSSLETPDGMSKHSPGDISV. Residues 7-27 are EJC-binding motif; may mediate interaction with the EJC; the sequence is RCRVRTKRPDMALYVPKARRG. The segment covering 235–247 has biased composition (polar residues); it reads LSSDSETAPSSLE. S671 carries the phosphoserine modification. Phosphothreonine is present on T695. Residues 734–766 are a coiled coil; it reads RSKQSKTEREAELRKLQEARERKRLEAKQREDI. Residues 755–775 are disordered; sequence RKRLEAKQREDIWEGRDQSVV.

May interact with the exon junction complex (EJC) composed at least of CASC3, EIF4A3, MAGOH and RBM8A.

The chain is Coiled-coil domain-containing protein R3HCC1L (R3hcc1l) from Mus musculus (Mouse).